Reading from the N-terminus, the 249-residue chain is tRNA (guanine-N(1)-)-methyltransferase (249 aa).

Residues glycine 116 and 136 to 141 each bind S-adenosyl-L-methionine; that span reads IGDYIL.

This sequence belongs to the RNA methyltransferase TrmD family. Homodimer.

Its subcellular location is the cytoplasm. The enzyme catalyses guanosine(37) in tRNA + S-adenosyl-L-methionine = N(1)-methylguanosine(37) in tRNA + S-adenosyl-L-homocysteine + H(+). In terms of biological role, specifically methylates guanosine-37 in various tRNAs. The sequence is that of tRNA (guanine-N(1)-)-methyltransferase from Zymomonas mobilis subsp. mobilis (strain ATCC 31821 / ZM4 / CP4).